The sequence spans 263 residues: Post-GPI attachment to proteins factor 2 (263 aa).

Transmembrane regions (helical) follow at residues 16–36 (FVFC…LLSL), 69–89 (YIWR…AVAF), 109–129 (FLCN…LALT), 143–163 (CFGG…WLFS), 180–200 (YKIL…YLYW), and 208–228 (PGIY…NIFF).

This sequence belongs to the PGAP2 family.

It is found in the golgi apparatus membrane. The protein localises to the endoplasmic reticulum membrane. Involved in the lipid remodeling steps of GPI-anchor maturation. Required for stable expression of GPI-anchored proteins at the cell surface. The chain is Post-GPI attachment to proteins factor 2 from Caenorhabditis briggsae.